The primary structure comprises 211 residues: Ribosome maturation factor RimM (211 aa).

The 72-residue stretch at 111–182 (PDAWYDHQLV…TLVVTPPLGL (72 aa)) folds into the PRC barrel domain. Residues 184-211 (EEIPDETPTAEPTPAEAAEPAPEGDDAR) are disordered. The segment covering 189-204 (ETPTAEPTPAEAAEPA) has biased composition (low complexity).

It belongs to the RimM family. In terms of assembly, binds ribosomal protein uS19.

The protein resides in the cytoplasm. Its function is as follows. An accessory protein needed during the final step in the assembly of 30S ribosomal subunit, possibly for assembly of the head region. Essential for efficient processing of 16S rRNA. May be needed both before and after RbfA during the maturation of 16S rRNA. It has affinity for free ribosomal 30S subunits but not for 70S ribosomes. The polypeptide is Ribosome maturation factor RimM (Clavibacter michiganensis subsp. michiganensis (strain NCPPB 382)).